Reading from the N-terminus, the 144-residue chain is Large ribosomal subunit protein uL15 (144 aa).

The segment at 20–49 is disordered; that stretch reads GRGIGSGLGKTGGRGHKGQKSRSGGFHKVG. Residues 21-31 are compositionally biased toward gly residues; sequence RGIGSGLGKTG.

The protein belongs to the universal ribosomal protein uL15 family. In terms of assembly, part of the 50S ribosomal subunit.

Binds to the 23S rRNA. This Neisseria gonorrhoeae (strain ATCC 700825 / FA 1090) protein is Large ribosomal subunit protein uL15.